We begin with the raw amino-acid sequence, 741 residues long: MVRYMVTSALPYANGPIHAGHLAGAYLPADIFVRYLRLKGEEVLFICGTDEHGTPITFRALKEGRSPREIVDEFHEHIKTTFERAKISFDFFGRTELPVHYRLSQEFFLKALENGHLVKKVTKQAYCEHDKMFLPDRYVIGTCPYCGAENQRGDQCEVCGHPLTPEILINPRCNICGNPITFKDSAHYYIRMQDFEERLKKWVESQEHWKPNVRNTVLGWINEGLEERAITRDLDWGIPVPLDDEDVKGKVLYVWFEAPIGYISITIEHLKREGKENEWKKFWLNLDGETKVIHFIGKDNIPFHAIFWPAFLMAYGKYRDEEVEAEWNLPYDIPANEYLNLEGKKFSTSRNWAIWVHEFLDVWPADYLRYYLTAIMPETRDSDFSFEDFKKKINEELVNNLGNFVHRAMTFVNRYFDGVVPERGELNDLDRQALEEIEKAFKETGELISNYRFKDALKRVMELAIFGNRYFDYQKPWKTAKENRERTATTVNVSLQIVKALGILLEPFLPDASEKIWHLLNLEEVKKWSFEELPAGHRVRKAFPMFRKVTDGEIIYFIVNYIGRGNPDSAKILLNKYYKQEDVVKVTLERFGEKRKDEALALLKSIYGDEFKGEKPEKAGKAEKKEKVKEGKKMEYVSFDEFAKLDLRVGKIIEVNDHPNADRLYVVKVDLGDEVRQLVAGLKKYYKPEELLGHYVVIIANLEPKKLRGVESQGMLLAADDGERVALLMPDKEVKLGARIR.

Residues Pro11–His21 carry the 'HIGH' region motif. Zn(2+) contacts are provided by Cys143, Cys146, Cys156, and Cys159. A 'KMSKS' region motif is present at residues Lys345–Ser349. Thr348 provides a ligand contact to ATP. The tRNA-binding domain occupies Glu641–Arg741.

This sequence belongs to the class-I aminoacyl-tRNA synthetase family. MetG type 1 subfamily. Homodimer. It depends on Zn(2+) as a cofactor.

Its subcellular location is the cytoplasm. The catalysed reaction is tRNA(Met) + L-methionine + ATP = L-methionyl-tRNA(Met) + AMP + diphosphate. Functionally, is required not only for elongation of protein synthesis but also for the initiation of all mRNA translation through initiator tRNA(fMet) aminoacylation. The protein is Methionine--tRNA ligase of Thermococcus kodakarensis (strain ATCC BAA-918 / JCM 12380 / KOD1) (Pyrococcus kodakaraensis (strain KOD1)).